A 95-amino-acid chain; its full sequence is Integration host factor subunit beta (95 aa).

This sequence belongs to the bacterial histone-like protein family. In terms of assembly, heterodimer of an alpha and a beta chain.

In terms of biological role, this protein is one of the two subunits of integration host factor, a specific DNA-binding protein that functions in genetic recombination as well as in transcriptional and translational control. The chain is Integration host factor subunit beta from Shewanella loihica (strain ATCC BAA-1088 / PV-4).